We begin with the raw amino-acid sequence, 278 residues long: Hydroxyethylthiazole kinase (278 aa).

Residue M48 coordinates substrate. ATP contacts are provided by R124 and T175. G202 contacts substrate.

The protein belongs to the Thz kinase family. The cofactor is Mg(2+).

It catalyses the reaction 5-(2-hydroxyethyl)-4-methylthiazole + ATP = 4-methyl-5-(2-phosphooxyethyl)-thiazole + ADP + H(+). It participates in cofactor biosynthesis; thiamine diphosphate biosynthesis; 4-methyl-5-(2-phosphoethyl)-thiazole from 5-(2-hydroxyethyl)-4-methylthiazole: step 1/1. Catalyzes the phosphorylation of the hydroxyl group of 4-methyl-5-beta-hydroxyethylthiazole (THZ). This chain is Hydroxyethylthiazole kinase, found in Clostridium botulinum (strain Alaska E43 / Type E3).